We begin with the raw amino-acid sequence, 465 residues long: 28S rRNA (cytosine-C(5))-methyltransferase (465 aa).

Gly-2 is modified (N-acetylglycine). Ser-167 carries the post-translational modification Phosphoserine. Residues 234–240, Asp-258, Arg-263, and Asp-305 contribute to the S-adenosyl-L-methionine site; that span reads CAAPGNK. The active-site Nucleophile is Cys-359. The segment at 430–465 is disordered; the sequence is TPAPQTDAMDPEPLSQVPKRKRRRKAAVGASMQPST.

Belongs to the class I-like SAM-binding methyltransferase superfamily. RsmB/NOP family. In terms of tissue distribution, in the hippocampus, specifically expressed in adult hippocampal NG2-positive oligodendrocyte precursor cells (at protein level).

The protein resides in the nucleus. Its subcellular location is the nucleolus. It catalyses the reaction a cytidine in 28S rRNA + S-adenosyl-L-methionine = a 5-methylcytidine in 28S rRNA + S-adenosyl-L-homocysteine + H(+). Its function is as follows. S-adenosyl-L-methionine-dependent methyltransferase that specifically methylates the C(5) position of cytosine 3438 (m5C3438) in 28S rRNA. m5C3782 promotes protein translation without affecting ribosome biogenesis and fidelity. Required for corpus callosum and cerebral cortex development. The sequence is that of 28S rRNA (cytosine-C(5))-methyltransferase from Mus musculus (Mouse).